Consider the following 105-residue polypeptide: Large ribosomal subunit protein uL24 (105 aa).

The disordered stretch occupies residues 1 to 25 (MHIKKGDNVKVIAGKDKGKEGKVVS).

Belongs to the universal ribosomal protein uL24 family. In terms of assembly, part of the 50S ribosomal subunit.

In terms of biological role, one of two assembly initiator proteins, it binds directly to the 5'-end of the 23S rRNA, where it nucleates assembly of the 50S subunit. One of the proteins that surrounds the polypeptide exit tunnel on the outside of the subunit. The sequence is that of Large ribosomal subunit protein uL24 from Staphylococcus saprophyticus subsp. saprophyticus (strain ATCC 15305 / DSM 20229 / NCIMB 8711 / NCTC 7292 / S-41).